A 319-amino-acid polypeptide reads, in one-letter code: Putative G-protein coupled receptor B0244.7 (319 aa).

A glycan (N-linked (GlcNAc...) asparagine) is linked at Asn-28. 6 consecutive transmembrane segments (helical) span residues 49–69 (AIFI…IYIF), 107–127 (LPVI…FIIF), 131–151 (SFLS…IAVV), 166–186 (VLLI…CGIV), 206–226 (GPVL…CLVI), and 261–281 (LFAG…SAII).

The protein belongs to the G-protein coupled receptor 1 family. B0244 subfamily.

The protein localises to the cell membrane. In Caenorhabditis elegans, this protein is Putative G-protein coupled receptor B0244.7.